The chain runs to 202 residues: Syndecan-4 (202 aa).

The signal sequence occupies residues 1–23 (MAPVCLFAPLLLLLLGGFPVAPG). The Extracellular portion of the chain corresponds to 24–149 (ESIRETEVID…QGSNIFERTE (126 aa)). 2 disordered regions span residues 42-76 (YFSG…TEEP) and 89-138 (LDNH…MSST). O-linked (Xyl...) (glycosaminoglycan) serine glycosylation occurs at S44. Positions 48–62 (PDDEDAGGLEQDSDF) are enriched in acidic residues. Residues S65 and S67 are each glycosylated (O-linked (Xyl...) (glycosaminoglycan) serine). Residues 105–121 (SEPKELEENEVIPKRVP) are compositionally biased toward basic and acidic residues. Residues 150–174 (VLAALIVGGVVGILFAVFLILLLVY) traverse the membrane as a helical segment. Over 175-202 (RMKKKDEGSYDLGKKPIYKKAPTNEFYA) the chain is Cytoplasmic.

This sequence belongs to the syndecan proteoglycan family. As to quaternary structure, homodimer. Interacts with CDCP1 and SDCBP. Interacts (via its cytoplasmic domain) with GIPC (via its PDZ domain). Interacts (via its cytoplasmic domain) with NUDT16L1. Interacts with DNM2; this interaction is markedly enhanced at focal ahesion site upon induction of focal adhesions and stress-fiber formation. In terms of processing, shedding is enhanced by a number of factors such as heparanase, thrombin or EGF. Also by stress and wound healing. PMA-mediated shedding is inhibited by TIMP3. O-glycosylated; contains both chondroitin sulfate and heparan sulfate. Ser-44, Ser-65 and Ser-67 can all be modified by either chondroitin sulfate or heparan sulfate, and the protein exists in forms that contain only chondroitin sulfate, only heparan sulfate and both chondroitin sulfate and heparan sulfate.

The protein localises to the membrane. The protein resides in the secreted. Its function is as follows. Cell surface proteoglycan which regulates exosome biogenesis in concert with SDCBP and PDCD6IP. The chain is Syndecan-4 from Rattus norvegicus (Rat).